The sequence spans 134 residues: MAILISPTNNTGWGLGTHKLFGGAKQKSDQHPVYVQAHYRASWGSKGRRRRQGRARGAPLDPKTEAEMVATIDEVARNGPPAARLVLEAARRVGAYNLRRARKLTPAGRAMMAMRARQMVKQAKKRKRRVRFRQ.

The propeptide occupies 2–23; that stretch reads AILISPTNNTGWGLGTHKLFGG. The tract at residues 40–62 is disordered; the sequence is RASWGSKGRRRRQGRARGAPLDP. The Nuclear localization signal motif lies at 125 to 134; the sequence is KRKRRVRFRQ.

The protein belongs to the adenoviridae histone-like nucleoprotein family. Interacts with the core-capsid bridging protein; this interaction bridges the virus core to the capsid. Interacts with host NPM1; this interaction might play a role in placing the pre-histone-like nucleoprotein on the viral DNA or regulating viral gene expression. Interacts with host HMGB1; this interaction inhibits host immune response. Post-translationally, cleaved near the N-terminus by the viral protease during virion maturation to form the mature protein.

The protein localises to the virion. The protein resides in the host nucleus. It is found in the host nucleolus. Functionally, plays a role in the inhibition of host immune response within the nucleus. Interacts with cellular nucleosomes and immobilizes the host immune danger signal HMGB1 on chromatin. In turn, prevents HMGB1 release out of the cell and thus decreases inflammation. Also plays a role in the wrapping and condensation of the viral DNA. May also promote viral genome import into the nucleus. This is Pre-histone-like nucleoprotein from Canis lupus familiaris (Dog).